Reading from the N-terminus, the 349-residue chain is Probable sugar phosphate/phosphate translocator At5g25400 (349 aa).

10 helical membrane passes run 15-35, 49-69, 89-109, 113-133, 141-161, 165-185, 205-225, 236-256, 263-283, and 286-306; these read IIIS…VIVY, FPIS…FLLI, VVPI…AYIY, SFIQ…GVLF, ETMM…YGEA, VWGV…LVMI, VAPC…FPIL, LIFG…FLLV, TMNV…WSVI, and TVTP…AYYN. Positions 38 to 156 constitute an EamA domain; that stretch reads YILDKKMYDW…LSISFGVAIA (119 aa). Positions 321-349 are disordered; it reads TAQQVDEETGRLLEEREGNEGGRKNEPED. Basic and acidic residues predominate over residues 328-349; it reads ETGRLLEEREGNEGGRKNEPED.

This sequence belongs to the TPT transporter family. TPT (TC 2.A.7.9) subfamily.

It is found in the membrane. This chain is Probable sugar phosphate/phosphate translocator At5g25400, found in Arabidopsis thaliana (Mouse-ear cress).